Here is a 471-residue protein sequence, read N- to C-terminus: Glutamate--tRNA ligase (471 aa).

The 'HIGH' region signature appears at 9–19 (PSPTGYLHVGG). Positions 98, 100, 125, and 127 each coordinate Zn(2+). The short motif at 237 to 241 (KLSKR) is the 'KMSKS' region element. Lys-240 serves as a coordination point for ATP.

The protein belongs to the class-I aminoacyl-tRNA synthetase family. Glutamate--tRNA ligase type 1 subfamily. As to quaternary structure, monomer. Requires Zn(2+) as cofactor.

The protein resides in the cytoplasm. The enzyme catalyses tRNA(Glu) + L-glutamate + ATP = L-glutamyl-tRNA(Glu) + AMP + diphosphate. Catalyzes the attachment of glutamate to tRNA(Glu) in a two-step reaction: glutamate is first activated by ATP to form Glu-AMP and then transferred to the acceptor end of tRNA(Glu). In Escherichia coli (strain SMS-3-5 / SECEC), this protein is Glutamate--tRNA ligase.